Reading from the N-terminus, the 346-residue chain is Inositol 2-dehydrogenase/D-chiro-inositol 3-dehydrogenase (346 aa).

Over residues 322 to 331 (GREESIELPK) the composition is skewed to basic and acidic residues. The tract at residues 322-346 (GREESIELPKKPAFYQHSAATPEQV) is disordered.

Belongs to the Gfo/Idh/MocA family. As to quaternary structure, homotetramer.

The catalysed reaction is myo-inositol + NAD(+) = scyllo-inosose + NADH + H(+). The enzyme catalyses 1D-chiro-inositol + NAD(+) = scyllo-inosine + NADH + H(+). It participates in polyol metabolism; myo-inositol degradation into acetyl-CoA; acetyl-CoA from myo-inositol: step 1/7. In terms of biological role, involved in the oxidation of myo-inositol (MI) and D-chiro-inositol (DCI) to 2-keto-myo-inositol (2KMI or 2-inosose) and 1-keto-D-chiro-inositol (1KDCI), respectively. This Shouchella clausii (strain KSM-K16) (Alkalihalobacillus clausii) protein is Inositol 2-dehydrogenase/D-chiro-inositol 3-dehydrogenase.